Here is a 135-residue protein sequence, read N- to C-terminus: FK506-binding protein 2 (135 aa).

The N-terminal stretch at 1 to 17 is a signal peptide; the sequence is MLLKSLFLLFLTAIAFA. Residues 40 to 127 enclose the PPIase FKBP-type domain; the sequence is GDLISVHYEG…VFVAELVDIA (88 aa). Residues 132 to 135 carry the Prevents secretion from ER motif; it reads HDEL.

The protein belongs to the FKBP-type PPIase family. FKBP2 subfamily.

The protein resides in the endoplasmic reticulum. The enzyme catalyses [protein]-peptidylproline (omega=180) = [protein]-peptidylproline (omega=0). With respect to regulation, inhibited by both FK506 and rapamycin. Its function is as follows. PPIases accelerate the folding of proteins. It catalyzes the cis-trans isomerization of proline imidic peptide bonds in oligopeptides. In Debaryomyces hansenii (strain ATCC 36239 / CBS 767 / BCRC 21394 / JCM 1990 / NBRC 0083 / IGC 2968) (Yeast), this protein is FK506-binding protein 2 (FPR2).